Reading from the N-terminus, the 722-residue chain is G2-specific protein kinase fin1 (722 aa).

A Protein kinase domain is found at 4-281; the sequence is YKILECIGHG…TYQLLRSPIL (278 aa). ATP-binding positions include 10-18 and K33; that span reads IGHGSFGRI. D151 (proton acceptor) is an active-site residue. Positions 528–557 are disordered; that stretch reads LSVESDETAVSASSGESVPTDSTLTDTKSK. The segment covering 535-546 has biased composition (polar residues); that stretch reads TAVSASSGESVP.

It belongs to the protein kinase superfamily. Ser/Thr protein kinase family. NIMA subfamily.

Its subcellular location is the cytoplasm. The protein resides in the cytoskeleton. It localises to the microtubule organizing center. It is found in the spindle pole body. It carries out the reaction L-seryl-[protein] + ATP = O-phospho-L-seryl-[protein] + ADP + H(+). It catalyses the reaction L-threonyl-[protein] + ATP = O-phospho-L-threonyl-[protein] + ADP + H(+). Functionally, promotes chromosome condensation and nuclear envelope dynamics during mitosis. Activity appears at metaphase-anaphase transition. The chain is G2-specific protein kinase fin1 (fin1) from Schizosaccharomyces pombe (strain 972 / ATCC 24843) (Fission yeast).